The chain runs to 208 residues: Holliday junction branch migration complex subunit RuvA (208 aa).

Positions Met1–Ala64 are domain I. Residues Ser65–Val143 are domain II. The segment at Ala139–Ser162 is disordered. The interval Pro144–Ala157 is flexible linker. The segment at Gly158 to Arg208 is domain III.

It belongs to the RuvA family. Homotetramer. Forms an RuvA(8)-RuvB(12)-Holliday junction (HJ) complex. HJ DNA is sandwiched between 2 RuvA tetramers; dsDNA enters through RuvA and exits via RuvB. An RuvB hexamer assembles on each DNA strand where it exits the tetramer. Each RuvB hexamer is contacted by two RuvA subunits (via domain III) on 2 adjacent RuvB subunits; this complex drives branch migration. In the full resolvosome a probable DNA-RuvA(4)-RuvB(12)-RuvC(2) complex forms which resolves the HJ.

The protein localises to the cytoplasm. Functionally, the RuvA-RuvB-RuvC complex processes Holliday junction (HJ) DNA during genetic recombination and DNA repair, while the RuvA-RuvB complex plays an important role in the rescue of blocked DNA replication forks via replication fork reversal (RFR). RuvA specifically binds to HJ cruciform DNA, conferring on it an open structure. The RuvB hexamer acts as an ATP-dependent pump, pulling dsDNA into and through the RuvAB complex. HJ branch migration allows RuvC to scan DNA until it finds its consensus sequence, where it cleaves and resolves the cruciform DNA. The sequence is that of Holliday junction branch migration complex subunit RuvA from Alkalilimnicola ehrlichii (strain ATCC BAA-1101 / DSM 17681 / MLHE-1).